The chain runs to 273 residues: Homeobox protein Hox-C13b (273 aa).

The segment at residues 201–260 (GRKKRVPYTKIQLKELEKEYAASKFITKDRRRRISATTSLSERQVTIWFQNRRVKEKKFV) is a DNA-binding region (homeobox).

Belongs to the Abd-B homeobox family.

The protein resides in the nucleus. Its function is as follows. Sequence-specific transcription factor which is part of a developmental regulatory system that provides cells with specific positional identities on the anterior-posterior axis. Plays a role in early embryonic development. This chain is Homeobox protein Hox-C13b (hoxc13b), found in Danio rerio (Zebrafish).